A 233-amino-acid polypeptide reads, in one-letter code: Large ribosomal subunit protein uL3 (233 aa).

This sequence belongs to the universal ribosomal protein uL3 family. As to quaternary structure, part of the 50S ribosomal subunit. Forms a cluster with proteins L14 and L19.

One of the primary rRNA binding proteins, it binds directly near the 3'-end of the 23S rRNA, where it nucleates assembly of the 50S subunit. This Ureaplasma urealyticum serovar 10 (strain ATCC 33699 / Western) protein is Large ribosomal subunit protein uL3.